Here is a 763-residue protein sequence, read N- to C-terminus: DNA-binding protein SATB1 (763 aa).

Residues 1 to 15 (MDHLNEATQGKEHSE) show a composition bias toward basic and acidic residues. The segment at 1 to 54 (MDHLNEATQGKEHSEMSNNVSDPKGPPAKIARLEQNGSPLGRGRLGSTGAKMQG) is disordered. The Nuclear localization signal motif lies at 20-40 (VSDPKGPPAKIARLEQNGSPL). Lysine 51 is covalently cross-linked (Glycyl lysine isopeptide (Lys-Gly) (interchain with G-Cter in SUMO2)). Residues 71–172 (GTMLPVFCVV…VVTLKIQLHS (102 aa)) enclose the CMP domain. At lysine 136 the chain carries N6-acetyllysine. The Protein interaction motif lies at 139–143 (PVPLS). A CUTL domain is found at 175-248 (KLEDLPPEQW…WYKHFKKTKD (74 aa)). Serine 185 is modified (phosphoserine). Residues 224–278 (YYANVSAAKCQEFGRWYKHFKKTKDMMVEMDSLSELSQQGANHVNFGQQPVPGNT) are nuclear matrix targeting sequence (NMTS). Residues 266–296 (HVNFGQQPVPGNTAEQPPSPAQLSHGSQPSV) show a composition bias toward polar residues. The segment at 266-307 (HVNFGQQPVPGNTAEQPPSPAQLSHGSQPSVRTPLPNLHPGL) is disordered. 2 DNA-binding regions (CUT) span residues 361–448 (LEQQ…QDER) and 484–571 (NGKP…EQES). DNA contacts are provided by residues glutamine 390, 400–410 (RTQGLLSEILR), and asparagine 425. Low complexity predominate over residues 591 to 607 (QIQQQQQQQQQQQQQQQ). The interval 591–649 (QIQQQQQQQQQQQQQQQAPPPPQPQQQPQTGPRLPPRQPTVASPAESDEENRQKTRPRT) is disordered. The residue at position 637 (serine 637) is a Phosphoserine. The homeobox DNA-binding region spans 645-704 (TRPRTKISVEALGILQSFIQDVGLYPDEEAIQTLSAQLDLPKYTIIKFFQNQRYYLKHHG). Lysine 744 participates in a covalent cross-link: Glycyl lysine isopeptide (Lys-Gly) (interchain with G-Cter in SUMO).

It belongs to the CUT homeobox family. In terms of assembly, interacts with CUX1 (via DNA-binding domains); the interaction inhibits the attachment of both proteins to DNA. Homodimer. Part of the nuclear protein complex gamma-globin promoter and enhancer binding factor (gamma-PE) composed at least of SATB1 and HOXB2. Interaction with CtBP1 when not acetylated stabilizes attachment to DNA and promotes transcription repression. Interacts with PCAF. Interacts with sumoylated PML and HDAC1 via the CMP domain. Interacts also with DYNLT3 and POLR2J2. Binds to EP300. (Microbial infection) Interacts (via the CMP domain) with HIV-1 Tat. In terms of processing, sumoylated. Sumoylation promotes cleavage by caspases. Phosphorylated by PKC. Acetylated by PCAF. Phosphorylated form interacts with HDAC1, but unphosphorylated form interacts with PCAF. DNA binding properties are activated by phosphorylation and inactivated by acetylation. In opposition, gene expression is down-regulated by phosphorylation but up-regulated by acetylation. Post-translationally, cleaved at Asp-254 by caspase-3 and caspase-6 during T-cell apoptosis in thymus and during B-cell stimulation. The cleaved forms cannot dimerize and lose transcription regulation function because of impaired DNA and chromatin association. In terms of tissue distribution, expressed predominantly in thymus.

It localises to the nucleus matrix. It is found in the nucleus. The protein localises to the PML body. Crucial silencing factor contributing to the initiation of X inactivation mediated by Xist RNA that occurs during embryogenesis and in lymphoma. Binds to DNA at special AT-rich sequences, the consensus SATB1-binding sequence (CSBS), at nuclear matrix- or scaffold-associated regions. Thought to recognize the sugar-phosphate structure of double-stranded DNA. Transcriptional repressor controlling nuclear and viral gene expression in a phosphorylated and acetylated status-dependent manner, by binding to matrix attachment regions (MARs) of DNA and inducing a local chromatin-loop remodeling. Acts as a docking site for several chromatin remodeling enzymes (e.g. PML at the MHC-I locus) and also by recruiting corepressors (HDACs) or coactivators (HATs) directly to promoters and enhancers. Modulates genes that are essential in the maturation of the immune T-cell CD8SP from thymocytes. Required for the switching of fetal globin species, and beta- and gamma-globin genes regulation during erythroid differentiation. Plays a role in chromatin organization and nuclear architecture during apoptosis. Interacts with the unique region (UR) of cytomegalovirus (CMV). Alu-like motifs and SATB1-binding sites provide a unique chromatin context which seems preferentially targeted by the HIV-1 integration machinery. Moreover, HIV-1 Tat may overcome SATB1-mediated repression of IL2 and IL2RA (interleukin) in T-cells by binding to the same domain than HDAC1. Delineates specific epigenetic modifications at target gene loci, directly up-regulating metastasis-associated genes while down-regulating tumor-suppressor genes. Reprograms chromatin organization and the transcription profiles of breast tumors to promote growth and metastasis. Promotes neuronal differentiation of neural stem/progenitor cells in the adult subventricular zone, possibly by positively regulating the expression of NEUROD1. The chain is DNA-binding protein SATB1 from Homo sapiens (Human).